The sequence spans 449 residues: Elongation factor 1-alpha (449 aa).

The region spanning lysine 5–valine 234 is the tr-type G domain. The tract at residues glycine 14–serine 21 is G1. Glycine 14–serine 21 contributes to the GTP binding site. N6,N6-dimethyllysine is present on lysine 55. Residues glycine 70–aspartate 74 are G2. Lysine 79 carries the post-translational modification N6,N6,N6-trimethyllysine. The segment at aspartate 91–glycine 94 is G3. GTP contacts are provided by residues aspartate 91–histidine 95 and asparagine 153–aspartate 156. A G4 region spans residues asparagine 153–aspartate 156. Residue lysine 187 is modified to N6,N6,N6-trimethyllysine. Positions serine 194–tryptophan 196 are G5. Residue lysine 265 is modified to N6-methyllysine. N6,N6,N6-trimethyllysine occurs at positions 310 and 400.

It belongs to the TRAFAC class translation factor GTPase superfamily. Classic translation factor GTPase family. EF-Tu/EF-1A subfamily.

The protein localises to the cytoplasm. This protein promotes the GTP-dependent binding of aminoacyl-tRNA to the A-site of ribosomes during protein biosynthesis. This Pyropia yezoensis (Susabi-nori) protein is Elongation factor 1-alpha.